Reading from the N-terminus, the 493-residue chain is Rop guanine nucleotide exchange factor 10 (493 aa).

Disordered stretches follow at residues 1–45 and 400–423; these read MFDG…RSDM and GEAETRSESEAESEYEETEKVVAA. Residues 17–27 show a composition bias toward basic and acidic residues; it reads DGMHTPEHELA. Residues 35–401 form the PRONE domain; sequence RRGKQNRRSD…RLVQRQLMGE (367 aa).

Guanine-nucleotide exchange factor (GEF) that acts as an activator of Rop (Rho of plants) GTPases by promoting the exchange of GDP for GTP. In Arabidopsis thaliana (Mouse-ear cress), this protein is Rop guanine nucleotide exchange factor 10 (ROPGEF10).